Reading from the N-terminus, the 346-residue chain is Cell division protein FtsZ 2 (346 aa).

Residues 23-27 (GGGGN), 110-112 (GTG), Glu141, Arg145, and Asp189 each bind GTP. The interval 320 to 346 (SNRSAQPTAPEAMNGQTAAAVPSRTLQ) is disordered.

This sequence belongs to the FtsZ family. As to quaternary structure, homodimer. Polymerizes to form a dynamic ring structure in a strictly GTP-dependent manner. Interacts directly with several other division proteins.

It is found in the cytoplasm. Functionally, essential cell division protein that forms a contractile ring structure (Z ring) at the future cell division site. The regulation of the ring assembly controls the timing and the location of cell division. One of the functions of the FtsZ ring is to recruit other cell division proteins to the septum to produce a new cell wall between the dividing cells. Binds GTP and shows GTPase activity. This Rhizobium meliloti (strain 1021) (Ensifer meliloti) protein is Cell division protein FtsZ 2.